The chain runs to 293 residues: 4-hydroxy-tetrahydrodipicolinate synthase (293 aa).

Residue Thr-45 participates in pyruvate binding. Catalysis depends on Tyr-133, which acts as the Proton donor/acceptor. Lys-162 serves as the catalytic Schiff-base intermediate with substrate. Ile-204 serves as a coordination point for pyruvate.

It belongs to the DapA family. Homotetramer; dimer of dimers.

The protein localises to the cytoplasm. The enzyme catalyses L-aspartate 4-semialdehyde + pyruvate = (2S,4S)-4-hydroxy-2,3,4,5-tetrahydrodipicolinate + H2O + H(+). It functions in the pathway amino-acid biosynthesis; L-lysine biosynthesis via DAP pathway; (S)-tetrahydrodipicolinate from L-aspartate: step 3/4. Its function is as follows. Catalyzes the condensation of (S)-aspartate-beta-semialdehyde [(S)-ASA] and pyruvate to 4-hydroxy-tetrahydrodipicolinate (HTPA). The protein is 4-hydroxy-tetrahydrodipicolinate synthase of Mesorhizobium japonicum (strain LMG 29417 / CECT 9101 / MAFF 303099) (Mesorhizobium loti (strain MAFF 303099)).